Here is a 401-residue protein sequence, read N- to C-terminus: Golgi membrane protein 1 (401 aa).

Met1 is modified (N-acetylmethionine). The Cytoplasmic segment spans residues 1 to 12; that stretch reads MMGLGNGRRSMK. Residues 13–35 form a helical; Signal-anchor for type II membrane protein membrane-spanning segment; that stretch reads SPPLVLAALVACIIVLGFNYWIA. Topologically, residues 36–401 are lumenal; the sequence is SSRSVDLQTR…DQREKRNHTL (366 aa). A coiled-coil region spans residues 40 to 205; the sequence is VDLQTRIMEL…QRQQLQALSE (166 aa). N-linked (GlcNAc...) (complex) asparagine glycosylation occurs at Asn109. The N-linked (GlcNAc...) asparagine glycan is linked to Asn144. The disordered stretch occupies residues 178–401; that stretch reads TKKGNEAVAS…DQREKRNHTL (224 aa). Ser187 carries the post-translational modification Phosphoserine. The span at 228 to 238 shows a compositional bias: polar residues; it reads LGNSKSQTPAP. 2 stretches are compositionally biased toward basic and acidic residues: residues 244–255 and 264–285; these read LDSKRQVEKEET and EPQR…DRPV. The segment covering 286-295 has biased composition (gly residues); sequence GGRGFGGAGE. A compositionally biased stretch (polar residues) spans 298-312; the sequence is QTPQVQAALSVSQEN. Position 309 is a phosphoserine; by FAM20C (Ser309). A compositionally biased stretch (acidic residues) spans 350–360; sequence DYNMDENEAES. Residues 381 to 395 show a composition bias toward basic and acidic residues; it reads EDQKRDTINLLDQRE. Asn398 carries N-linked (GlcNAc...) asparagine glycosylation.

Belongs to the GOLM family. As to quaternary structure, interacts with DYM. Glycosylated. In terms of processing, phosphorylation sites are present in the extracellular medium. In terms of tissue distribution, widely expressed. Highly expressed in colon, prostate, trachea and stomach. Expressed at lower level in testis, muscle, lymphoid tissues, white blood cells and spleen. Predominantly expressed by cells of the epithelial lineage. Expressed at low level in normal liver. Expression significantly increases in virus (HBV, HCV) infected liver. Expression does not increase in liver disease due to non-viral causes (alcohol-induced liver disease, autoimmune hepatitis). Increased expression in hepatocytes appears to be a general feature of advanced liver disease. In liver tissue from patients with adult giant-cell hepatitis (GCH), it is strongly expressed in hepatocytes-derived syncytial giant cells. Constitutively expressed by biliary epithelial cells but not by hepatocytes.

It localises to the golgi apparatus. The protein resides in the cis-Golgi network membrane. In terms of biological role, unknown. Cellular response protein to viral infection. The polypeptide is Golgi membrane protein 1 (GOLM1) (Homo sapiens (Human)).